The following is a 449-amino-acid chain: MVRNCLSIVLAAGEGTRMKSPLPKVLHKIAGLPLVCHVIKQIELAGSLQLAVVVGSGAEDITKVVQSFTKNAMIFEQKERLGTAHAVLSARLALQEEVDDILIVFGDTPLIEHSSLVRIRAFLADGADVVVAGFYASDPTGYGRLIKKNGKLITIVEEKDASDEEKKVSLCNGGIMALNGKYALSLLNKIDNNNMQQEYYLTDVVSIASRQNLNIQVVEIPFDNVIGINNCFELFEADALWQKRKARDLMLSGVTILKPESVYFSYDTEIEPGVLIEPNVYFGPGVKIQSGAVIRAFSYLEGAVVGRDAQIGPYARLRFGTELERSVKVGNFCEIKQAKVGEFSKINHLSYIGDTEIGTNTNIGAGAITCNYDGFNKHKTVIDDDVFIGSNSVLVAPLSIGKGSYIASGSVITEDVPINSMVFGRARQVIKEDRAIKLRAHLSKNKRNK.

The tract at residues 1–231 (MVRNCLSIVL…FDNVIGINNC (231 aa)) is pyrophosphorylase. UDP-N-acetyl-alpha-D-glucosamine contacts are provided by residues 10–13 (LAAG), Lys24, Gln77, and 82–83 (GT). Asp107 serves as a coordination point for Mg(2+). Gly143, Glu157, Asn172, and Asn229 together coordinate UDP-N-acetyl-alpha-D-glucosamine. Residue Asn229 coordinates Mg(2+). Residues 232–252 (FELFEADALWQKRKARDLMLS) form a linker region. The segment at 253 to 449 (GVTILKPESV…AHLSKNKRNK (197 aa)) is N-acetyltransferase. UDP-N-acetyl-alpha-D-glucosamine contacts are provided by Arg318 and Lys336. The Proton acceptor role is filled by His348. UDP-N-acetyl-alpha-D-glucosamine contacts are provided by Tyr351 and Asn362. Residues Ala365, 371-372 (NY), Ser390, Ser408, and Arg425 each bind acetyl-CoA.

In the N-terminal section; belongs to the N-acetylglucosamine-1-phosphate uridyltransferase family. The protein in the C-terminal section; belongs to the transferase hexapeptide repeat family. Homotrimer. Requires Mg(2+) as cofactor.

Its subcellular location is the cytoplasm. It catalyses the reaction alpha-D-glucosamine 1-phosphate + acetyl-CoA = N-acetyl-alpha-D-glucosamine 1-phosphate + CoA + H(+). The enzyme catalyses N-acetyl-alpha-D-glucosamine 1-phosphate + UTP + H(+) = UDP-N-acetyl-alpha-D-glucosamine + diphosphate. It functions in the pathway nucleotide-sugar biosynthesis; UDP-N-acetyl-alpha-D-glucosamine biosynthesis; N-acetyl-alpha-D-glucosamine 1-phosphate from alpha-D-glucosamine 6-phosphate (route II): step 2/2. Its pathway is nucleotide-sugar biosynthesis; UDP-N-acetyl-alpha-D-glucosamine biosynthesis; UDP-N-acetyl-alpha-D-glucosamine from N-acetyl-alpha-D-glucosamine 1-phosphate: step 1/1. It participates in bacterial outer membrane biogenesis; LPS lipid A biosynthesis. In terms of biological role, catalyzes the last two sequential reactions in the de novo biosynthetic pathway for UDP-N-acetylglucosamine (UDP-GlcNAc). The C-terminal domain catalyzes the transfer of acetyl group from acetyl coenzyme A to glucosamine-1-phosphate (GlcN-1-P) to produce N-acetylglucosamine-1-phosphate (GlcNAc-1-P), which is converted into UDP-GlcNAc by the transfer of uridine 5-monophosphate (from uridine 5-triphosphate), a reaction catalyzed by the N-terminal domain. This is Bifunctional protein GlmU from Bartonella bacilliformis (strain ATCC 35685 / KC583 / Herrer 020/F12,63).